Here is a 472-residue protein sequence, read N- to C-terminus: Gamma-aminobutyric acid receptor subunit beta-2 (472 aa).

The signal sequence occupies residues 1-23; that stretch reads RVRKKDYFGIWSFPLIIAAVCAQ. The Extracellular segment spans residues 24-239; sequence SVNDPSNMSL…LSLSFKLKRN (216 aa). 2 N-linked (GlcNAc...) asparagine glycosylation sites follow: asparagine 30 and asparagine 102. Tyrosine 119 is a histamine binding site. A disulfide bridge links cysteine 158 with cysteine 172. Histamine contacts are provided by residues 178–179 and threonine 224; that span reads SY. Positions 179 and 224 each coordinate 4-aminobutanoate. Transmembrane regions (helical) follow at residues 240–260, 271–290, and 309–329; these read IGYF…LSWV, ARVA…NTHL, and GCFV…YIFF. Positions 287–308 are etomidate binding; allosteric effector; that stretch reads NTHLRETLPKIPYVKAIDMYLM. Topologically, residues 330–450 are cytoplasmic; sequence GRGPQRQKKA…LTDVNAIDRW (121 aa). Tyrosine 401 bears the Phosphotyrosine mark. Residues 451–471 form a helical membrane-spanning segment; that stretch reads SRIFFPVVFSFFNIVYWLYYV.

It belongs to the ligand-gated ion channel (TC 1.A.9) family. Gamma-aminobutyric acid receptor (TC 1.A.9.5) subfamily. GABRB2 sub-subfamily. Heteropentamer, formed by a combination of alpha (GABRA1-6), beta (GABRB1-3), gamma (GABRG1-3), delta (GABRD), epsilon (GABRE), rho (GABRR1-3), pi (GABRP) and theta (GABRQ) chains, each subunit exhibiting distinct physiological and pharmacological properties. Interacts with UBQLN1. May interact with KIF21B. Identified in a complex of 720 kDa composed of LHFPL4, NLGN2, GABRA1, GABRB2, GABRG2 and GABRB3. Glycosylated.

The protein localises to the postsynaptic cell membrane. It is found in the cell membrane. Its subcellular location is the cytoplasmic vesicle membrane. The catalysed reaction is chloride(in) = chloride(out). Its activity is regulated as follows. Allosterically activated by benzodiazepines. Allosterically activated by the anesthetic etomidate. Inhibited by the antagonist bicuculline. Potentiated by histamine. Its function is as follows. Beta subunit of the heteropentameric ligand-gated chloride channel gated by gamma-aminobutyric acid (GABA), a major inhibitory neurotransmitter in the brain. GABA-gated chloride channels, also named GABA(A) receptors (GABAAR), consist of five subunits arranged around a central pore and contain GABA active binding site(s) located at the alpha and beta subunit interface(s). When activated by GABA, GABAARs selectively allow the flow of chloride anions across the cell membrane down their electrochemical gradient. Chloride influx into the postsynaptic neuron following GABAAR opening decreases the neuron ability to generate a new action potential, thereby reducing nerve transmission. GABAARs containing alpha-1 and beta-2 or -3 subunits exhibit synaptogenic activity; the gamma-2 subunit being necessary but not sufficient to induce rapid synaptic contacts formation. Extrasynaptic beta-2 receptors contribute to the tonic GABAergic inhibition. Beta-containing GABAARs can simultaneously bind GABA and histamine where histamine binds at the interface of two neighboring beta subunits, which may be involved in the regulation of sleep and wakefulness. The chain is Gamma-aminobutyric acid receptor subunit beta-2 (GABRB2) from Bos taurus (Bovine).